A 295-amino-acid chain; its full sequence is Light-independent protochlorophyllide reductase iron-sulfur ATP-binding protein (295 aa).

ATP contacts are provided by residues 39-44 (GIGKST) and Lys-68. Ser-43 serves as a coordination point for Mg(2+). [4Fe-4S] cluster is bound by residues Cys-124 and Cys-158. 209–210 (NR) is a binding site for ATP.

This sequence belongs to the NifH/BchL/ChlL family. As to quaternary structure, homodimer. Protochlorophyllide reductase is composed of three subunits; ChlL, ChlN and ChlB. [4Fe-4S] cluster serves as cofactor.

The enzyme catalyses chlorophyllide a + oxidized 2[4Fe-4S]-[ferredoxin] + 2 ADP + 2 phosphate = protochlorophyllide a + reduced 2[4Fe-4S]-[ferredoxin] + 2 ATP + 2 H2O. It functions in the pathway porphyrin-containing compound metabolism; chlorophyll biosynthesis (light-independent). Functionally, component of the dark-operative protochlorophyllide reductase (DPOR) that uses Mg-ATP and reduced ferredoxin to reduce ring D of protochlorophyllide (Pchlide) to form chlorophyllide a (Chlide). This reaction is light-independent. The L component serves as a unique electron donor to the NB-component of the complex, and binds Mg-ATP. The polypeptide is Light-independent protochlorophyllide reductase iron-sulfur ATP-binding protein (Prochlorococcus marinus (strain AS9601)).